The primary structure comprises 141 residues: Nuclear transcription factor Y subunit B-1 (141 aa).

Residues 1-23 (MADTPSSPAGDGGESGGSVREQD) form a disordered region. A2 bears the N-acetylalanine mark. The DNA-binding element occupies 26–32 (LPIANIS). Positions 53 to 64 (VQECVSEFISFI) are subunit association domain (SAD). The segment at 114-141 (DNKGSGKSGDGSNRDAGGGVSGEEMPSW) is disordered.

This sequence belongs to the NFYB/HAP3 subunit family. As to quaternary structure, heterotrimeric transcription factor composed of three components, NF-YA, NF-YB and NF-YC. NF-YB and NF-YC must interact and dimerize for NF-YA association and DNA binding. Binds directly with DPB3-1. Ubiquitous. Predominantly expressed in leaves, flowers and siliques.

It localises to the nucleus. Component of the NF-Y/HAP transcription factor complex. The NF-Y complex stimulates the transcription of various genes by recognizing and binding to a CCAAT motif in promoters. The sequence is that of Nuclear transcription factor Y subunit B-1 from Arabidopsis thaliana (Mouse-ear cress).